The chain runs to 257 residues: Pantothenate synthetase (257 aa).

ATP is bound at residue 29–36; that stretch reads MGNLHAGH. The active-site Proton donor is the His-36. Gln-60 is a (R)-pantoate binding site. Residue Gln-60 participates in beta-alanine binding. 145 to 148 lines the ATP pocket; the sequence is GEKD. (R)-pantoate is bound at residue Gln-151. ATP is bound by residues Val-174 and 182–185; that span reads LSSR.

Belongs to the pantothenate synthetase family. In terms of assembly, homodimer.

It localises to the cytoplasm. It catalyses the reaction (R)-pantoate + beta-alanine + ATP = (R)-pantothenate + AMP + diphosphate + H(+). It participates in cofactor biosynthesis; (R)-pantothenate biosynthesis; (R)-pantothenate from (R)-pantoate and beta-alanine: step 1/1. Functionally, catalyzes the condensation of pantoate with beta-alanine in an ATP-dependent reaction via a pantoyl-adenylate intermediate. In Coxiella burnetii (strain CbuK_Q154) (Coxiella burnetii (strain Q154)), this protein is Pantothenate synthetase.